The primary structure comprises 421 residues: Gamma-glutamyl phosphate reductase (421 aa).

Belongs to the gamma-glutamyl phosphate reductase family.

Its subcellular location is the cytoplasm. The enzyme catalyses L-glutamate 5-semialdehyde + phosphate + NADP(+) = L-glutamyl 5-phosphate + NADPH + H(+). The protein operates within amino-acid biosynthesis; L-proline biosynthesis; L-glutamate 5-semialdehyde from L-glutamate: step 2/2. Catalyzes the NADPH-dependent reduction of L-glutamate 5-phosphate into L-glutamate 5-semialdehyde and phosphate. The product spontaneously undergoes cyclization to form 1-pyrroline-5-carboxylate. The chain is Gamma-glutamyl phosphate reductase from Leifsonia xyli subsp. xyli (strain CTCB07).